The chain runs to 1832 residues: COPII coat assembly protein sec16 (1832 aa).

Disordered regions lie at residues 1-163, 183-209, 240-269, 345-863, 1420-1482, 1509-1679, and 1692-1832; these read MAQP…NDAQ, GATV…RDNE, LGQG…EDDE, QAEL…APVP, PATG…HGMP, EDSA…LGEE, and VNKK…VMAK. Residues 57–74 show a composition bias toward polar residues; the sequence is ENGSIESKTAISADTSDQ. Residues 91 to 118 show a composition bias toward basic and acidic residues; sequence SKPDTEEPDKPSRDESIFMQTDKSRAVE. A compositionally biased stretch (polar residues) spans 123–133; the sequence is NVPTENGNVDI. The segment covering 137–151 has biased composition (basic and acidic residues); it reads LEEHVAEEPHYEGPE. Acidic residues-rich tracts occupy residues 257-269, 348-361, and 369-383; these read QVDD…EDDE, LSDD…TEDD, and ELDD…DDDT. Residues 422–457 are compositionally biased toward polar residues; the sequence is VSYTPHQPSTSDLLSGIPAQNTAAQPTNASMSSYFS. Over residues 471-480 the composition is skewed to basic and acidic residues; it reads SFAERSKEGY. Over residues 510-524 the composition is skewed to pro residues; that stretch reads VPKPPPRSSSIPAPP. Composition is skewed to polar residues over residues 528–546 and 590–603; these read STVS…TAPQ and NQYS…QSNI. Residues 622–636 show a composition bias toward low complexity; it reads NLLAPNVPSAPAVPS. Over residues 653-665 the composition is skewed to pro residues; it reads KPPPSPRYSPAPP. Residues 679 to 688 are compositionally biased toward polar residues; that stretch reads YASQPASISG. Positions 705–721 are enriched in basic and acidic residues; the sequence is YHEKIHYEDQGQSEERP. Over residues 738-747 the composition is skewed to polar residues; that stretch reads SEQPVSSENK. Residues 814 to 829 are compositionally biased toward low complexity; sequence PRRSQTQSPSQTLSPR. 4 stretches are compositionally biased toward polar residues: residues 845-854, 1428-1439, 1513-1538, and 1550-1559; these read HGSTSPTRTV, QPVSQYAPSASP, SGAQ…SSTY, and QAVSTTSQPD. Basic and acidic residues-rich tracts occupy residues 1594–1603 and 1620–1644; these read EDKPKKKSIM and KAER…DAKK. A compositionally biased stretch (pro residues) spans 1725 to 1736; the sequence is GPPPAMATPPPT. Over residues 1737–1756 the composition is skewed to low complexity; sequence GASGSRPSSSAGAPTSVSAS. The span at 1757 to 1769 shows a compositional bias: pro residues; the sequence is PAPPSLGAPPPAI.

Belongs to the SEC16 family.

It localises to the endoplasmic reticulum membrane. In terms of biological role, involved in the initiation of assembly of the COPII coat required for the formation of transport vesicles from the endoplasmic reticulum (ER) and the selection of cargo molecules. Also involved in autophagy. This chain is COPII coat assembly protein sec16 (sec16), found in Aspergillus fumigatus (strain ATCC MYA-4609 / CBS 101355 / FGSC A1100 / Af293) (Neosartorya fumigata).